Consider the following 201-residue polypeptide: UPF0301 protein RER_60040 (201 aa).

Belongs to the UPF0301 (AlgH) family.

The protein is UPF0301 protein RER_60040 of Rhodococcus erythropolis (strain PR4 / NBRC 100887).